The following is a 682-amino-acid chain: Acyl-CoA synthetase short-chain family member 3, mitochondrial (682 aa).

Residues Met1 to Gly29 constitute a mitochondrion transit peptide. A CoA-binding site is contributed by Glu222–Arg225. ATP contacts are provided by residues Gly420–Arg422 and Asp441–Thr446. At Lys513 the chain carries N6-succinyllysine. Lys519 is subject to N6-acetyllysine. Residues Asp534, Arg549, and Arg560 each coordinate ATP. Arg619 lines the CoA pocket.

The protein belongs to the ATP-dependent AMP-binding enzyme family.

The protein resides in the mitochondrion matrix. It catalyses the reaction acetate + ATP + CoA = acetyl-CoA + AMP + diphosphate. It carries out the reaction propanoate + ATP + CoA = propanoyl-CoA + AMP + diphosphate. The catalysed reaction is butanoate + ATP + CoA = butanoyl-CoA + AMP + diphosphate. Its function is as follows. Catalyzes the synthesis of acetyl-CoA from short-chain fatty acids. Propionate is the preferred substrate but can also utilize acetate and butyrate with a much lower affinity. The chain is Acyl-CoA synthetase short-chain family member 3, mitochondrial (Acss3) from Mus musculus (Mouse).